The following is a 365-amino-acid chain: Heat-inducible transcription repressor HrcA (365 aa).

It belongs to the HrcA family.

In terms of biological role, negative regulator of class I heat shock genes (grpE-dnaK-dnaJ and groELS operons). Prevents heat-shock induction of these operons. This chain is Heat-inducible transcription repressor HrcA, found in Trichormus variabilis (strain ATCC 29413 / PCC 7937) (Anabaena variabilis).